Reading from the N-terminus, the 442-residue chain is MSSESLTVIVGLGKTGLSCAQFLAAKNQPFAVMDSREEPPEWENFIKTYPRVELIRGQFSEKLLNEAQEIILSPGVSLQEPLIAKQAAQGKSIIGDIELFARNVNKPIIAITGSNGKTTVTTVVGLMMKAAGRNVSVCGNIGEPVLEQITPEPDYYVLELSSFQLETTFSLRSQAATILNISEDHMNRYATLQDYLRAKQRIYTDCFIPIVNADEPEIWCHLPFNKKPLSFGLNNAADFSLAEHNQKTSIAYQGKILMPIQELKLNARHHLQNALAALALGTAAKIPIENMLHLLRDFSGIRHRCQWVRKYKEIDYYNDSKGTNVGATRAAIESLGQAAKGQLILIAGGQGKGADFSPLKDVVKRYVKQVILIGEDAPLLEKTLKEITVIKHADSMNEAVKRSTQAAKAGDIVLLSPACASFDMFTNYEHRGDVFTETVEAL.

ATP is bound at residue 113–119 (GSNGKTT).

Belongs to the MurCDEF family.

It localises to the cytoplasm. It catalyses the reaction UDP-N-acetyl-alpha-D-muramoyl-L-alanine + D-glutamate + ATP = UDP-N-acetyl-alpha-D-muramoyl-L-alanyl-D-glutamate + ADP + phosphate + H(+). The protein operates within cell wall biogenesis; peptidoglycan biosynthesis. Cell wall formation. Catalyzes the addition of glutamate to the nucleotide precursor UDP-N-acetylmuramoyl-L-alanine (UMA). The polypeptide is UDP-N-acetylmuramoylalanine--D-glutamate ligase (Coxiella burnetii (strain CbuK_Q154) (Coxiella burnetii (strain Q154))).